The primary structure comprises 238 residues: Alpha-tubulin N-acetyltransferase (238 aa).

Positions 1–196 (MEFDFDISQS…NNFVVFEDLF (196 aa)) constitute an N-acetyltransferase domain. Acetyl-CoA-binding positions include 129–142 (FYVH…GNGK) and 165–174 (SFKFLSFLQK).

It belongs to the acetyltransferase ATAT1 family.

It carries out the reaction L-lysyl-[alpha-tubulin] + acetyl-CoA = N(6)-acetyl-L-lysyl-[alpha-tubulin] + CoA + H(+). Its function is as follows. Specifically acetylates 'Lys-40' in alpha-tubulin on the lumenal side of microtubules. Promotes microtubule destabilization and accelerates microtubule dynamics; this activity may be independent of acetylation activity. Acetylates alpha-tubulin with a slow enzymatic rate, due to a catalytic site that is not optimized for acetyl transfer. Enters the microtubule through each end and diffuses quickly throughout the lumen of microtubules. Acetylates only long/old microtubules because of its slow acetylation rate since it does not have time to act on dynamically unstable microtubules before the enzyme is released. This Trichoplax adhaerens (Trichoplax reptans) protein is Alpha-tubulin N-acetyltransferase.